We begin with the raw amino-acid sequence, 284 residues long: Protease HtpX (284 aa).

2 helical membrane-spanning segments follow: residues 4-24 (ILLF…ILSL) and 33-53 (MGLL…SLLM). Residue histidine 139 participates in Zn(2+) binding. Residue glutamate 140 is part of the active site. A Zn(2+)-binding site is contributed by histidine 143. 2 helical membrane-spanning segments follow: residues 147–167 (GDMV…IFAA) and 187–207 (IYFL…SMIA). Position 215 (glutamate 215) interacts with Zn(2+).

It belongs to the peptidase M48B family. Requires Zn(2+) as cofactor.

The protein resides in the cell inner membrane. This chain is Protease HtpX, found in Mannheimia succiniciproducens (strain KCTC 0769BP / MBEL55E).